Here is a 404-residue protein sequence, read N- to C-terminus: uncharacterized protein (404 aa).

Belongs to the lymphocryptovirus BTRF1 family.

This is an uncharacterized protein from Epstein-Barr virus (strain GD1) (HHV-4).